We begin with the raw amino-acid sequence, 429 residues long: Tol-Pal system protein TolB (429 aa).

The first 22 residues, 1-22 (MTRRLFILITIMLCLIPALLHS), serve as a signal peptide directing secretion. Disordered regions lie at residues 362–383 (PDGT…RWSP) and 407–429 (GSGQ…SPRW). Residues 363–374 (DGTNDTRLTSEG) show a composition bias toward polar residues.

This sequence belongs to the TolB family. In terms of assembly, the Tol-Pal system is composed of five core proteins: the inner membrane proteins TolA, TolQ and TolR, the periplasmic protein TolB and the outer membrane protein Pal. They form a network linking the inner and outer membranes and the peptidoglycan layer.

It localises to the periplasm. Its function is as follows. Part of the Tol-Pal system, which plays a role in outer membrane invagination during cell division and is important for maintaining outer membrane integrity. The chain is Tol-Pal system protein TolB from Geobacter metallireducens (strain ATCC 53774 / DSM 7210 / GS-15).